Consider the following 210-residue polypeptide: Glycerol-3-phosphate acyltransferase (210 aa).

5 helical membrane-spanning segments follow: residues 4-24, 52-72, 82-102, 118-138, and 159-179; these read LIVA…IVSA, AAIL…WLTG, DTSV…PVFF, LAIN…VAFF, and FLFG…LLIW.

The protein belongs to the PlsY family. In terms of assembly, probably interacts with PlsX.

The protein resides in the cell inner membrane. It carries out the reaction an acyl phosphate + sn-glycerol 3-phosphate = a 1-acyl-sn-glycero-3-phosphate + phosphate. It functions in the pathway lipid metabolism; phospholipid metabolism. Catalyzes the transfer of an acyl group from acyl-phosphate (acyl-PO(4)) to glycerol-3-phosphate (G3P) to form lysophosphatidic acid (LPA). This enzyme utilizes acyl-phosphate as fatty acyl donor, but not acyl-CoA or acyl-ACP. The chain is Glycerol-3-phosphate acyltransferase from Paraburkholderia phymatum (strain DSM 17167 / CIP 108236 / LMG 21445 / STM815) (Burkholderia phymatum).